Consider the following 522-residue polypeptide: Wax ester synthase/diacylglycerol acyltransferase 4 (522 aa).

The segment covering 1–12 (MEIETRPHISGD) has biased composition (basic and acidic residues). Residues 1-20 (MEIETRPHISGDEKEEEQPL) form a disordered region. At 1-205 (MEIETRPHIS…SDSRLLWLVK (205 aa)) the chain is on the cytoplasmic side. Residue His-149 is the Proton acceptor of the active site. The helical transmembrane segment at 206–226 (VIWTAVILGLNTVCDALEFIV) threads the bilayer. Residues 227–522 (TTLFVKDTET…QIAGLLYRML (296 aa)) lie on the Lumenal side of the membrane. Asn-270 and Asn-409 each carry an N-linked (GlcNAc...) asparagine glycan.

It in the N-terminal section; belongs to the long-chain O-acyltransferase family. In terms of tissue distribution, mostly expressed in roots, flowers and siliques.

It is found in the cell membrane. Its subcellular location is the endoplasmic reticulum membrane. It catalyses the reaction an acyl-CoA + a 1,2-diacyl-sn-glycerol = a triacyl-sn-glycerol + CoA. It carries out the reaction a long chain fatty alcohol + a fatty acyl-CoA = a wax ester + CoA. The protein operates within glycerolipid metabolism; triacylglycerol biosynthesis. It participates in lipid metabolism. Functionally, bifunctional wax ester synthase/diacylglycerol acyltransferase. Involved in cuticular wax biosynthesis. The protein is Wax ester synthase/diacylglycerol acyltransferase 4 of Arabidopsis thaliana (Mouse-ear cress).